Reading from the N-terminus, the 109-residue chain is Putative transporter-like protein YIL171W (109 aa).

Residues methionine 1–alanine 22 are compositionally biased toward polar residues. Positions methionine 1–asparagine 40 are disordered. The Cytoplasmic portion of the chain corresponds to methionine 1–serine 56. A compositionally biased stretch (basic and acidic residues) spans lysine 29–leucine 39. A helical membrane pass occupies residues alanine 57 to tryptophan 77. Topologically, residues aspartate 78 to lysine 109 are extracellular. N-linked (GlcNAc...) asparagine glycosylation is present at asparagine 87.

Belongs to the major facilitator superfamily. Sugar transporter (TC 2.A.1.1) family.

It is found in the cell membrane. Its function is as follows. Probable glucose transporter. The polypeptide is Putative transporter-like protein YIL171W (Saccharomyces cerevisiae (strain ATCC 204508 / S288c) (Baker's yeast)).